Here is a 491-residue protein sequence, read N- to C-terminus: AAA-ATPase At2g46620 (491 aa).

A helical membrane pass occupies residues 1-21 (MGILWDSFLLLLVSTFALFLV). An ATP-binding site is contributed by 238-245 (GPSGTGKS). The disordered stretch occupies residues 423–460 (GTGRRLLLENGSRKSTSEDVSDDMSGSLCGGGGGSSPA).

Belongs to the AAA ATPase family. BCS1 subfamily. Mg(2+) is required as a cofactor.

The protein resides in the membrane. It catalyses the reaction ATP + H2O = ADP + phosphate + H(+). In Arabidopsis thaliana (Mouse-ear cress), this protein is AAA-ATPase At2g46620.